The following is an 88-amino-acid chain: Putative membrane protein insertion efficiency factor (88 aa).

This sequence belongs to the UPF0161 family.

The protein localises to the cell inner membrane. Could be involved in insertion of integral membrane proteins into the membrane. The protein is Putative membrane protein insertion efficiency factor of Coxiella burnetii (strain Dugway 5J108-111).